Reading from the N-terminus, the 307-residue chain is uncharacterized protein (307 aa).

Basic and acidic residues-rich tracts occupy residues 42-52 (TCRSPGEDKCP) and 112-121 (QKKEEPEGSH). The segment at 42 to 153 (TCRSPGEDKC…VPPAVASASA (112 aa)) is disordered. A compositionally biased stretch (basic residues) spans 129-139 (KQHKKAKKRKS).

This is an uncharacterized protein from Mus musculus (Mouse).